The following is a 204-amino-acid chain: Casparian strip membrane protein 2 (204 aa).

The Cytoplasmic segment spans residues Met1–Gly42. The helical transmembrane segment at Leu43–Ala63 threads the bilayer. The Extracellular portion of the chain corresponds to Thr64–Gln92. The chain crosses the membrane as a helical span at residues Phe93 to Val113. The Cytoplasmic segment spans residues Val114–Arg125. Residues Leu126 to Ala146 form a helical membrane-spanning segment. The Extracellular segment spans residues Ala147 to Gly178. The chain crosses the membrane as a helical span at residues Ala179–Val199. The Cytoplasmic segment spans residues Ala200–His204.

Belongs to the Casparian strip membrane proteins (CASP) family. As to quaternary structure, homodimer and heterodimers with other CASP proteins. Interacts with CASP1, CASP3 and CASP4.

Its subcellular location is the cell membrane. In terms of biological role, regulates membrane-cell wall junctions and localized cell wall deposition. Required for establishment of the Casparian strip membrane domain (CSD) and the subsequent formation of Casparian strips, a cell wall modification of the root endodermis that determines an apoplastic barrier between the intraorganismal apoplasm and the extraorganismal apoplasm and prevents lateral diffusion. The sequence is that of Casparian strip membrane protein 2 (CASP2) from Arabidopsis thaliana (Mouse-ear cress).